The following is a 522-amino-acid chain: Protein GDS1 (522 aa).

Disordered stretches follow at residues 56–88 (ALDD…PKKD), 222–268 (QQLE…SSNS), 300–391 (LSPS…SHNA), and 433–489 (STQT…SRNE). Residues 62–73 (LAGSSFSSSQEI) show a composition bias toward polar residues. Residues 74–88 (KATKPKKDFGAPKKD) show a composition bias toward basic and acidic residues. Composition is skewed to polar residues over residues 222 to 236 (QQLE…FNSN), 244 to 260 (SSNQ…SMTD), 300 to 314 (LSPS…LLTP), and 355 to 366 (SQSLSVLSTPKK). Low complexity predominate over residues 368–378 (SSASLSTFASS). Residues 379 to 391 (KNISPDSSLSHNA) show a composition bias toward polar residues. A compositionally biased stretch (low complexity) spans 439 to 467 (ESSSESSQYNSSSSSPVNSAAASSAESLS). The segment covering 468–489 (DINSSQDNGRESNPSSQESRNE) has biased composition (polar residues).

Involved in nuclear control of mitochondria. The polypeptide is Protein GDS1 (GDS1) (Saccharomyces cerevisiae (strain ATCC 204508 / S288c) (Baker's yeast)).